We begin with the raw amino-acid sequence, 171 residues long: Adenine phosphoribosyltransferase (171 aa).

It belongs to the purine/pyrimidine phosphoribosyltransferase family. Homodimer.

It localises to the cytoplasm. It catalyses the reaction AMP + diphosphate = 5-phospho-alpha-D-ribose 1-diphosphate + adenine. It participates in purine metabolism; AMP biosynthesis via salvage pathway; AMP from adenine: step 1/1. Catalyzes a salvage reaction resulting in the formation of AMP, that is energically less costly than de novo synthesis. This is Adenine phosphoribosyltransferase from Methylococcus capsulatus (strain ATCC 33009 / NCIMB 11132 / Bath).